The following is a 977-amino-acid chain: Protein bicaudal C homolog 1 (977 aa).

The tract at residues 1–43 (MASQSEPGYLAAAQSDPGSNSERSTDSPVAGSEDDLVAAAPLL) is disordered. Phosphoserine occurs at positions 27, 32, and 45. KH domains lie at 134-201 (RVTL…RARI) and 286-350 (PVST…RQYL). K400 carries the post-translational modification N6-acetyllysine. A compositionally biased stretch (polar residues) spans 590-621 (SLGEKVLSSNHGDPSMQTAGPEQASPKSNSVE). Disordered regions lie at residues 590–622 (SLGE…SVEG), 667–702 (GTKN…GSER), and 794–848 (EGSS…KSRE). A phosphoserine mark is found at S614 and S681. Basic and acidic residues predominate over residues 692–702 (LADKKAPGSER). The span at 794 to 803 (EGSSLSLSRS) shows a compositional bias: low complexity. An SAM domain is found at 875–938 (FKGSDLPELF…LLAISELSKN (64 aa)).

This sequence belongs to the BicC family. Interacts (via KH domains) with ANKS6 (via SAM domain) in an RNA-dependent manner. Interacts with ANKS3. As to expression, in the adult, predominantly expressed in heart and kidney. In 8 week old mice, expressed in growing primary oocytes and in the stromal cells of the theca.

The protein resides in the cytoplasm. Its function is as follows. Putative RNA-binding protein. May be involved in regulating gene expression during embryonic development. In Mus musculus (Mouse), this protein is Protein bicaudal C homolog 1 (Bicc1).